The following is a 59-amino-acid chain: Large ribosomal subunit protein uL30 (59 aa).

This sequence belongs to the universal ribosomal protein uL30 family. As to quaternary structure, part of the 50S ribosomal subunit.

The sequence is that of Large ribosomal subunit protein uL30 from Solibacter usitatus (strain Ellin6076).